Consider the following 416-residue polypeptide: Glutamyl-tRNA reductase (416 aa).

Substrate contacts are provided by residues 48-51, serine 104, 109-111, and glutamine 115; these read TCNR and EPQ. The Nucleophile role is filled by cysteine 49. 184–189 provides a ligand contact to NADP(+); sequence GAGEMI.

It belongs to the glutamyl-tRNA reductase family. Homodimer.

It catalyses the reaction (S)-4-amino-5-oxopentanoate + tRNA(Glu) + NADP(+) = L-glutamyl-tRNA(Glu) + NADPH + H(+). Its pathway is porphyrin-containing compound metabolism; protoporphyrin-IX biosynthesis; 5-aminolevulinate from L-glutamyl-tRNA(Glu): step 1/2. Functionally, catalyzes the NADPH-dependent reduction of glutamyl-tRNA(Glu) to glutamate 1-semialdehyde (GSA). This chain is Glutamyl-tRNA reductase, found in Dechloromonas aromatica (strain RCB).